The following is a 111-amino-acid chain: Large ribosomal subunit protein uL22 (111 aa).

This sequence belongs to the universal ribosomal protein uL22 family. In terms of assembly, part of the 50S ribosomal subunit.

Its function is as follows. This protein binds specifically to 23S rRNA; its binding is stimulated by other ribosomal proteins, e.g. L4, L17, and L20. It is important during the early stages of 50S assembly. It makes multiple contacts with different domains of the 23S rRNA in the assembled 50S subunit and ribosome. Functionally, the globular domain of the protein is located near the polypeptide exit tunnel on the outside of the subunit, while an extended beta-hairpin is found that lines the wall of the exit tunnel in the center of the 70S ribosome. The protein is Large ribosomal subunit protein uL22 of Chlamydia trachomatis serovar L2 (strain ATCC VR-902B / DSM 19102 / 434/Bu).